The primary structure comprises 533 residues: Purine-cytosine permease FCY2 (533 aa).

The Cytoplasmic segment spans residues 1 to 98; the sequence is MLEEGNNVYE…NAASMWFSAN (98 aa). A Glycyl lysine isopeptide (Lys-Gly) (interchain with G-Cter in ubiquitin) cross-link involves residue lysine 16. Serine 18 bears the Phosphoserine mark. The helical transmembrane segment at 99-119 threads the bilayer; it reads MVIASYALGALGPMVFGLNFG. The Extracellular portion of the chain corresponds to 120 to 121; the sequence is QS. Residues 122–141 traverse the membrane as a helical segment; it reads VLVIIFFNIMGLIFVAFFSV. Residues 142–198 are Cytoplasmic-facing; the sequence is FGAELGLRQMILSRYLVGNVTARIFSLINVIACVGWGIVNTSVSAQLLNMVNEGSGH. Residues 165–184 form a surface seeking region; it reads IFSLINVIACVGWGIVNTSV. Residues 199–218 traverse the membrane as a helical segment; the sequence is VCPIWAGCLIIIGGTVLVTF. Over 219–256 the chain is Extracellular; sequence FGYSVIHAYEKWSWVPNFAVFLVIIAQLSRSGKFKGGE. The chain crosses the membrane as a helical span at residues 257–276; sequence WVGGATTAGSVLSFGSSIFG. The Cytoplasmic segment spans residues 277 to 300; that stretch reads FAAGWTTYAADYTVYMPKSTNKYK. The chain crosses the membrane as a helical span at residues 301–320; the sequence is IFFSLVAGLAFPLFFTMILG. Topologically, residues 321 to 347 are extracellular; sequence AASAMAALNDPTWKAYYDKNAMGGVIY. A helical membrane pass occupies residues 348–367; the sequence is AILVPNSLNGFGQFCCVLLA. Residues 368-398 are Cytoplasmic-facing; the sequence is LSTIANNIPNMYTVALSAQALWAPLAKIPRV. The helical transmembrane segment at 399–418 threads the bilayer; that stretch reads VWTMAGNAATLGISIPATYY. At 419-465 the chain is on the extracellular side; that stretch reads FDGFMENFMDSIGYYLAIYIAISCSEHFFYRRSFSAYNIDDWDNWEH. Residues 466–485 traverse the membrane as a helical segment; that stretch reads LPIGIAGTAALIVGAFGVAL. Topologically, residues 486–533 are cytoplasmic; sequence GMCQTYWVGEIGRLIGKYGGDIGFELGASWAFIIYNILRPLELKYFGR.

It belongs to the purine-cytosine permease (2.A.39) family. Not N-glycosylated.

Its subcellular location is the membrane. In terms of biological role, this permease has a broad specificity towards purines, and also transport cytosine and 5-methylcytosine but neither uracil nor thymine. In Saccharomyces cerevisiae (strain ATCC 204508 / S288c) (Baker's yeast), this protein is Purine-cytosine permease FCY2 (FCY2).